The sequence spans 272 residues: MAAGEISTPQEYIGHHLNNLQLDLRTFELVNPHDAPATFWVLNIDSMFFSVVLGLVFLVLFRQVAKSATSGVPGKLQAAIELVIGFVDNNVRDMYHGKSKVIAPLALTIFVWVFLMNFMDLLPIDLLPYIGEHFLGLPALRVVPSADVNITLSMALGVFVLILFYSIKMKGIGGFSKELTLQPFNHPIFIPINLILEGVSLLSKPVSLGLRLFGNMYAGELIFILIAGLLPWWSQWILSVPWAIFHILIISLQAFIFMVLTIVYLSMASEEH.

5 helical membrane-spanning segments follow: residues 41–61 (VLNI…LVLF), 101–121 (VIAP…FMDL), 147–167 (DVNI…FYSI), 221–241 (LIFI…LSVP), and 243–263 (AIFH…LTIV).

It belongs to the ATPase A chain family. In terms of assembly, F-type ATPases have 2 components, CF(1) - the catalytic core - and CF(0) - the membrane proton channel. CF(1) has five subunits: alpha(3), beta(3), gamma(1), delta(1), epsilon(1). CF(0) has three main subunits: a(1), b(2) and c(9-12). The alpha and beta chains form an alternating ring which encloses part of the gamma chain. CF(1) is attached to CF(0) by a central stalk formed by the gamma and epsilon chains, while a peripheral stalk is formed by the delta and b chains.

It localises to the cell inner membrane. Key component of the proton channel; it plays a direct role in the translocation of protons across the membrane. The sequence is that of ATP synthase subunit a from Erwinia tasmaniensis (strain DSM 17950 / CFBP 7177 / CIP 109463 / NCPPB 4357 / Et1/99).